Reading from the N-terminus, the 1142-residue chain is Coiled-coil domain-containing protein 40 (1142 aa).

2 disordered regions span residues 1 to 197 and 251 to 274; these read MAEP…QVLP and PSTE…AEDE. 2 stretches are compositionally biased toward basic and acidic residues: residues 11–27 and 35–55; these read SHPE…EGNN and PEKD…HPEE. The span at 63 to 96 shows a compositional bias: acidic residues; it reads AIEEGEVETEGEAAVEGEEEAVSYGDAESEEEYY. A Phosphoserine modification is found at S252. The span at 265 to 274 shows a compositional bias: acidic residues; the sequence is EGSDEEAEDE. Coiled coils occupy residues 293–319, 349–470, 526–627, 684–950, and 1005–1054; these read AALK…ATKQ, HDRH…QAED, QAKS…LRRK, TSSR…LGQL, and VRKA…LTRL.

This sequence belongs to the CCDC40 family.

It is found in the cytoplasm. It localises to the cell projection. Its subcellular location is the cilium. Required for assembly of dynein regulatory complex (DRC) and inner dynein arm (IDA) complexes, which are responsible for ciliary beat regulation, thereby playing a central role in motility in cilia and flagella. Probably acts together with CCDC39 to form a molecular ruler that determines the 96 nanometer (nm) repeat length and arrangements of components in cilia and flagella. Not required for outer dynein arm complexes assembly. Required for axonemal recruitment of CCDC39. The protein is Coiled-coil domain-containing protein 40 of Homo sapiens (Human).